Reading from the N-terminus, the 295-residue chain is Ethanolamine ammonia-lyase small subunit (295 aa).

Adenosylcob(III)alamin is bound by residues V209 and E230.

Belongs to the EutC family. As to quaternary structure, the basic unit is a heterodimer which dimerizes to form tetramers. The heterotetramers trimerize; 6 large subunits form a core ring with 6 small subunits projecting outwards. It depends on adenosylcob(III)alamin as a cofactor.

It localises to the bacterial microcompartment. It catalyses the reaction ethanolamine = acetaldehyde + NH4(+). The protein operates within amine and polyamine degradation; ethanolamine degradation. Functionally, catalyzes the deamination of various vicinal amino-alcohols to oxo compounds. Allows this organism to utilize ethanolamine as the sole source of nitrogen and carbon in the presence of external vitamin B12. The polypeptide is Ethanolamine ammonia-lyase small subunit (Clostridium perfringens (strain ATCC 13124 / DSM 756 / JCM 1290 / NCIMB 6125 / NCTC 8237 / Type A)).